Consider the following 212-residue polypeptide: Redox-sensing transcriptional repressor Rex (212 aa).

Positions 16-55 (IYYRYLNILLDADKTRVSSTELSEAVKVDSATIRRDFSYF) form a DNA-binding region, H-T-H motif. An NAD(+)-binding site is contributed by 90–95 (GVGNLG).

The protein belongs to the transcriptional regulatory Rex family. As to quaternary structure, homodimer.

The protein localises to the cytoplasm. Its function is as follows. Modulates transcription in response to changes in cellular NADH/NAD(+) redox state. In Levilactobacillus brevis (strain ATCC 367 / BCRC 12310 / CIP 105137 / JCM 1170 / LMG 11437 / NCIMB 947 / NCTC 947) (Lactobacillus brevis), this protein is Redox-sensing transcriptional repressor Rex.